The following is a 432-amino-acid chain: Eukaryotic translation initiation factor 3 subunit E (432 aa).

In terms of domain architecture, PCI spans 221 to 401; that stretch reads VYYNYPKGRD…MGVKSVSIHE (181 aa).

Belongs to the eIF-3 subunit E family. As to quaternary structure, component of the eukaryotic translation initiation factor 3 (eIF-3) complex.

The protein localises to the cytoplasm. Component of the eukaryotic translation initiation factor 3 (eIF-3) complex, which is involved in protein synthesis of a specialized repertoire of mRNAs and, together with other initiation factors, stimulates binding of mRNA and methionyl-tRNAi to the 40S ribosome. The eIF-3 complex specifically targets and initiates translation of a subset of mRNAs involved in cell proliferation. In Caenorhabditis elegans, this protein is Eukaryotic translation initiation factor 3 subunit E.